The following is a 185-amino-acid chain: Ribosome-recycling factor (185 aa).

It belongs to the RRF family.

It localises to the cytoplasm. Its function is as follows. Responsible for the release of ribosomes from messenger RNA at the termination of protein biosynthesis. May increase the efficiency of translation by recycling ribosomes from one round of translation to another. This is Ribosome-recycling factor from Pseudoalteromonas atlantica (strain T6c / ATCC BAA-1087).